Consider the following 154-residue polypeptide: Ribonuclease H (154 aa).

Residues 5-146 form the RNase H type-1 domain; sequence EQNIVYLYCD…ADELANRGID (142 aa). 4 residues coordinate Mg(2+): D14, E52, D74, and D138.

This sequence belongs to the RNase H family. In terms of assembly, monomer. It depends on Mg(2+) as a cofactor.

It is found in the cytoplasm. The enzyme catalyses Endonucleolytic cleavage to 5'-phosphomonoester.. In terms of biological role, endonuclease that specifically degrades the RNA of RNA-DNA hybrids. The chain is Ribonuclease H from Coxiella burnetii (strain CbuK_Q154) (Coxiella burnetii (strain Q154)).